We begin with the raw amino-acid sequence, 336 residues long: Effector SCP41 (336 aa).

The N-terminal stretch at 1 to 19 (MRTETASLLLLAALSVAEE) is a signal peptide. Disordered regions lie at residues 59–99 (LFSP…STNN) and 189–230 (PVGN…GQKG). Positions 63–74 (QQQQQQQQQQQQ) are enriched in low complexity.

In terms of assembly, interacts with A.thaliana CBP60G; the interaction is direct. Interacts with A.thaliana SARD1. Interacts with G.hirsutum CBP60B.

Its subcellular location is the secreted. It localises to the host nucleus. Its function is as follows. Effector that binds transcription regulators in the host plant to suppress the host's innate immune response. Inhibits the host plant transcription regulators CBP60G and SARD1. In Verticillium dahliae (strain VdLs.17 / ATCC MYA-4575 / FGSC 10137) (Verticillium wilt), this protein is Effector SCP41.